Consider the following 111-residue polypeptide: Small ribosomal subunit protein uS15c (111 aa).

Belongs to the universal ribosomal protein uS15 family. In terms of assembly, part of the 30S ribosomal subunit.

The protein localises to the plastid. It localises to the chloroplast. The protein is Small ribosomal subunit protein uS15c (rps15) of Staurastrum punctulatum (Green alga).